A 215-amino-acid chain; its full sequence is UPF0502 protein YceH (215 aa).

The protein belongs to the UPF0502 family.

This Salmonella paratyphi A (strain ATCC 9150 / SARB42) protein is UPF0502 protein YceH.